We begin with the raw amino-acid sequence, 103 residues long: MYAVFQSGGKQHRVSEGQTLRLEKLDVETGATVEFDKVLLVANGEDIKVGAPLVEGGKIVAEVVQHGRGDKVKIVKFRRRKHSRKQQGHRQWFTEVKITGINA.

Belongs to the bacterial ribosomal protein bL21 family. In terms of assembly, part of the 50S ribosomal subunit. Contacts protein L20.

Functionally, this protein binds to 23S rRNA in the presence of protein L20. This is Large ribosomal subunit protein bL21 from Vibrio parahaemolyticus serotype O3:K6 (strain RIMD 2210633).